The primary structure comprises 396 residues: tRNA-specific 2-thiouridylase MnmA (396 aa).

ATP is bound by residues 11 to 18 and M37; that span reads GLSGGVDS. The interaction with target base in tRNA stretch occupies residues 97 to 99; that stretch reads NPD. C102 serves as the catalytic Nucleophile. C102 and C225 form a disulfide bridge. Residue G126 coordinates ATP. An interaction with tRNA region spans residues 175-177; that stretch reads KDQ. C225 functions as the Cysteine persulfide intermediate in the catalytic mechanism. An interaction with tRNA region spans residues 343 to 344; it reads RY.

It belongs to the MnmA/TRMU family.

The protein localises to the cytoplasm. The enzyme catalyses S-sulfanyl-L-cysteinyl-[protein] + uridine(34) in tRNA + AH2 + ATP = 2-thiouridine(34) in tRNA + L-cysteinyl-[protein] + A + AMP + diphosphate + H(+). Functionally, catalyzes the 2-thiolation of uridine at the wobble position (U34) of tRNA, leading to the formation of s(2)U34. The polypeptide is tRNA-specific 2-thiouridylase MnmA (Methylibium petroleiphilum (strain ATCC BAA-1232 / LMG 22953 / PM1)).